A 335-amino-acid chain; its full sequence is Probable magnesium transporter NIPA1 (335 aa).

Topologically, residues 1 to 7 are extracellular; sequence MDQMSPD. The chain crosses the membrane as a helical span at residues 8-28; that stretch reads NINGVILAVSSSIFIGSSFII. The Cytoplasmic segment spans residues 29–55; the sequence is KKKGLKKAGASGVRAGEGGYGYLKEPW. A helical membrane pass occupies residues 56-76; the sequence is WWAGMITMIVGEVANFAAYAF. Over 77–79 the chain is Extracellular; sequence APA. The chain crosses the membrane as a helical span at residues 80 to 100; sequence ILVTPLGALSIIFSAVLAHFI. Residues 101–104 are Cytoplasmic-facing; sequence LKEK. Residues 105 to 125 traverse the membrane as a helical segment; sequence LHMFGILGCILCVVGSTTIVL. Topologically, residues 126–143 are extracellular; the sequence is HAPHEQKIESVKQIWQLA. Residues 144 to 164 traverse the membrane as a helical segment; it reads IEPGFLVYSAVIVIVVAILIF. The Cytoplasmic portion of the chain corresponds to 165–179; sequence YYEPRYGKTHMIVYV. Residues 180 to 200 traverse the membrane as a helical segment; that stretch reads GICSLMGSLTVMSVKAVAIAI. The Extracellular segment spans residues 201–212; the sequence is KLTFSGTNQFKY. The helical transmembrane segment at 213-233 threads the bilayer; sequence FNTWIFILVVATCCILQINYL. Topologically, residues 234-244 are cytoplasmic; that stretch reads NKALDTFNTAV. A helical transmembrane segment spans residues 245 to 265; that stretch reads ISPVYYVMFTTFTIIASMIMF. Over 266-272 the chain is Extracellular; it reads KDWASQS. A helical transmembrane segment spans residues 273-293; it reads GLKIATELCGFVTILSGTFLL. At 294-335 the chain is on the cytoplasmic side; that stretch reads HKTKDMGNSASGRGSISMPTRDTPVFTNSGSGRSSSSDKVAS. Over residues 303–321 the composition is skewed to polar residues; the sequence is ASGRGSISMPTRDTPVFTN. The interval 303–335 is disordered; sequence ASGRGSISMPTRDTPVFTNSGSGRSSSSDKVAS. A compositionally biased stretch (low complexity) spans 322-335; sequence SGSGRSSSSDKVAS.

It belongs to the NIPA (TC 2.A.7) family. Homodimer.

It localises to the cell membrane. Its subcellular location is the early endosome. Acts as a Mg(2+) transporter. Can also transport other divalent cations such as Fe(2+), Sr(2+), Ba(2+), Mn(2+) and Co(2+) but to a much less extent than Mg(2+). In Arabidopsis thaliana (Mouse-ear cress), this protein is Probable magnesium transporter NIPA1.